Here is a 366-residue protein sequence, read N- to C-terminus: NADH-quinone oxidoreductase subunit D (366 aa).

Belongs to the complex I 49 kDa subunit family. As to quaternary structure, NDH-1 is composed of 14 different subunits. Subunits NuoB, C, D, E, F, and G constitute the peripheral sector of the complex.

It localises to the cell membrane. The enzyme catalyses a quinone + NADH + 5 H(+)(in) = a quinol + NAD(+) + 4 H(+)(out). Functionally, NDH-1 shuttles electrons from NADH, via FMN and iron-sulfur (Fe-S) centers, to quinones in the respiratory chain. The immediate electron acceptor for the enzyme in this species is believed to be a menaquinone. Couples the redox reaction to proton translocation (for every two electrons transferred, four hydrogen ions are translocated across the cytoplasmic membrane), and thus conserves the redox energy in a proton gradient. This Bacillus thuringiensis (strain Al Hakam) protein is NADH-quinone oxidoreductase subunit D.